Here is a 539-residue protein sequence, read N- to C-terminus: GMP synthase [glutamine-hydrolyzing] (539 aa).

The Glutamine amidotransferase type-1 domain maps to 4 to 202 (KILILDFGSQ…VLDIAGAKPD (199 aa)). The active-site Nucleophile is C81. Residues H176 and E178 contribute to the active site. One can recognise a GMPS ATP-PPase domain in the interval 203–395 (WIMRDHIEEA…LGLPAEMVYR (193 aa)). 230 to 236 (SGGVDSS) serves as a coordination point for ATP.

In terms of assembly, homodimer.

The catalysed reaction is XMP + L-glutamine + ATP + H2O = GMP + L-glutamate + AMP + diphosphate + 2 H(+). Its pathway is purine metabolism; GMP biosynthesis; GMP from XMP (L-Gln route): step 1/1. Its function is as follows. Catalyzes the synthesis of GMP from XMP. This Burkholderia pseudomallei (strain 1106a) protein is GMP synthase [glutamine-hydrolyzing].